Consider the following 491-residue polypeptide: Probable malate:quinone oxidoreductase (491 aa).

The protein belongs to the MQO family. FAD serves as cofactor.

It carries out the reaction (S)-malate + a quinone = a quinol + oxaloacetate. Its pathway is carbohydrate metabolism; tricarboxylic acid cycle; oxaloacetate from (S)-malate (quinone route): step 1/1. In Actinobacillus pleuropneumoniae serotype 7 (strain AP76), this protein is Probable malate:quinone oxidoreductase.